We begin with the raw amino-acid sequence, 515 residues long: Fibril protein (515 aa).

At Met-1 the chain carries Blocked amino end (Met). 4 helical regions span residues 21-34 (VKKY…IQHV), 206-228 (HKFK…FNLL), 357-376 (KIET…AEKC), and 426-440 (SNEF…LKDV).

The protein resides in the cytoplasm. The protein localises to the cytoskeleton. Functionally, acts as a cytoskeletal structure involved in the shape and motility of spiroplasmas. The sequence is that of Fibril protein from Spiroplasma citri.